A 219-amino-acid chain; its full sequence is RNA-free ribonuclease P (219 aa).

Belongs to the HARP family.

It catalyses the reaction Endonucleolytic cleavage of RNA, removing 5'-extranucleotides from tRNA precursor.. RNA-free RNase P that catalyzes the removal of the 5'-leader sequence from pre-tRNA to produce the mature 5'-terminus. This chain is RNA-free ribonuclease P, found in Staphylothermus marinus (strain ATCC 43588 / DSM 3639 / JCM 9404 / F1).